The following is a 586-amino-acid chain: A-type ATP synthase subunit A (586 aa).

Position 232 to 239 (232 to 239 (GPFGSGKT)) interacts with ATP.

Belongs to the ATPase alpha/beta chains family. In terms of assembly, has multiple subunits with at least A(3), B(3), C, D, E, F, H, I and proteolipid K(x).

The protein resides in the cell membrane. It carries out the reaction ATP + H2O + 4 H(+)(in) = ADP + phosphate + 5 H(+)(out). In terms of biological role, component of the A-type ATP synthase that produces ATP from ADP in the presence of a proton gradient across the membrane. The A chain is the catalytic subunit. In Methanococcus maripaludis (strain C7 / ATCC BAA-1331), this protein is A-type ATP synthase subunit A.